The following is a 243-amino-acid chain: Membrane selenoprotein (243 aa).

Residues 12–63 (GEDCEGGVUARPSSSSSSINNASDESTPLISKTNDEEKANIGISSTSNSPQE) are disordered. Residue Sec-20 is a non-standard amino acid, selenocysteine. Polar residues-rich tracts occupy residues 30–43 (INNASDESTPLISK) and 53–63 (GISSTSNSPQE). Transmembrane regions (helical) follow at residues 74-94 (ILTLLISIPALVGSUCWPVLI), 102-122 (VSAGSVELAHSLTFAITLSIL), 144-164 (IKFGPFYLTAIAVPLATFDIL), and 199-219 (VMGWFSAIVFTYTGYACLLVG). Residue Sec-88 is a non-standard amino acid, selenocysteine.

The protein localises to the membrane. The polypeptide is Membrane selenoprotein (msp) (Dictyostelium discoideum (Social amoeba)).